The following is a 213-amino-acid chain: ATP-dependent Clp protease proteolytic subunit (213 aa).

S114 (nucleophile) is an active-site residue. Residue H139 is part of the active site.

Belongs to the peptidase S14 family. As to quaternary structure, fourteen ClpP subunits assemble into 2 heptameric rings which stack back to back to give a disk-like structure with a central cavity, resembling the structure of eukaryotic proteasomes.

It is found in the cytoplasm. It carries out the reaction Hydrolysis of proteins to small peptides in the presence of ATP and magnesium. alpha-casein is the usual test substrate. In the absence of ATP, only oligopeptides shorter than five residues are hydrolyzed (such as succinyl-Leu-Tyr-|-NHMec, and Leu-Tyr-Leu-|-Tyr-Trp, in which cleavage of the -Tyr-|-Leu- and -Tyr-|-Trp bonds also occurs).. Cleaves peptides in various proteins in a process that requires ATP hydrolysis. Has a chymotrypsin-like activity. Plays a major role in the degradation of misfolded proteins. The polypeptide is ATP-dependent Clp protease proteolytic subunit (Ectopseudomonas mendocina (strain ymp) (Pseudomonas mendocina)).